The chain runs to 317 residues: Methionyl-tRNA formyltransferase (317 aa).

Position 112–115 (112–115 (SLLP)) interacts with (6S)-5,6,7,8-tetrahydrofolate.

Belongs to the Fmt family.

The enzyme catalyses L-methionyl-tRNA(fMet) + (6R)-10-formyltetrahydrofolate = N-formyl-L-methionyl-tRNA(fMet) + (6S)-5,6,7,8-tetrahydrofolate + H(+). Its function is as follows. Attaches a formyl group to the free amino group of methionyl-tRNA(fMet). The formyl group appears to play a dual role in the initiator identity of N-formylmethionyl-tRNA by promoting its recognition by IF2 and preventing the misappropriation of this tRNA by the elongation apparatus. In Mycobacterium avium (strain 104), this protein is Methionyl-tRNA formyltransferase.